The primary structure comprises 300 residues: GTPase Era (300 aa).

The Era-type G domain maps to 4-172 (KSGFVALIGR…LEKIKKLLPE (169 aa)). The G1 stretch occupies residues 12-19 (GRPNVGKS). 12–19 (GRPNVGKS) contributes to the GTP binding site. The G2 stretch occupies residues 38 to 42 (QTTRN). Residues 59-62 (DTPG) form a G3 region. GTP-binding positions include 59–63 (DTPGV) and 122–125 (NKAD). A G4 region spans residues 122 to 125 (NKAD). The G5 stretch occupies residues 151–153 (IAA). One can recognise a KH type-2 domain in the interval 195 to 281 (IREKILLNLS…NLQLWVKVKK (87 aa)).

Belongs to the TRAFAC class TrmE-Era-EngA-EngB-Septin-like GTPase superfamily. Era GTPase family. As to quaternary structure, monomer.

It localises to the cytoplasm. The protein resides in the cell membrane. An essential GTPase that binds both GDP and GTP, with rapid nucleotide exchange. Plays a role in 16S rRNA processing and 30S ribosomal subunit biogenesis and possibly also in cell cycle regulation and energy metabolism. This is GTPase Era from Caldicellulosiruptor saccharolyticus (strain ATCC 43494 / DSM 8903 / Tp8T 6331).